Here is a 788-residue protein sequence, read N- to C-terminus: Protein translocase subunit SecA 2 (788 aa).

Residues Q86, 104 to 108 (GEGKT), and D493 each bind ATP.

This sequence belongs to the SecA family. Monomer and homodimer. Part of the essential Sec protein translocation apparatus which comprises SecA, SecYEG and auxiliary proteins SecDF. Other proteins may also be involved.

The protein resides in the cell membrane. It localises to the cytoplasm. It carries out the reaction ATP + H2O + cellular proteinSide 1 = ADP + phosphate + cellular proteinSide 2.. Part of the Sec protein translocase complex. Interacts with the SecYEG preprotein conducting channel. Has a central role in coupling the hydrolysis of ATP to the transfer of proteins into and across the cell membrane, serving as an ATP-driven molecular motor driving the stepwise translocation of polypeptide chains across the membrane. The chain is Protein translocase subunit SecA 2 from Bacillus cereus (strain ZK / E33L).